The chain runs to 310 residues: Porphobilinogen deaminase (310 aa).

An S-(dipyrrolylmethanemethyl)cysteine modification is found at cysteine 243.

Belongs to the HMBS family. In terms of assembly, monomer. It depends on dipyrromethane as a cofactor.

It carries out the reaction 4 porphobilinogen + H2O = hydroxymethylbilane + 4 NH4(+). It participates in porphyrin-containing compound metabolism; protoporphyrin-IX biosynthesis; coproporphyrinogen-III from 5-aminolevulinate: step 2/4. Its function is as follows. Tetrapolymerization of the monopyrrole PBG into the hydroxymethylbilane pre-uroporphyrinogen in several discrete steps. This is Porphobilinogen deaminase from Mannheimia succiniciproducens (strain KCTC 0769BP / MBEL55E).